Here is a 101-residue protein sequence, read N- to C-terminus: Apolipoprotein C-II (101 aa).

The signal sequence occupies residues Met-1–Gly-22. The lipid binding stretch occupies residues Thr-66–Met-74. The tract at residues Ser-78–Glu-101 is lipoprotein lipase cofactor.

Belongs to the apolipoprotein C2 family. In terms of processing, proapolipoprotein C-II is synthesized as a sialic acid containing glycoprotein which is subsequently desialylated prior to its proteolytic processing. Proapolipoprotein C-II, the major form found in plasma undergoes proteolytic cleavage of its N-terminal hexapeptide to generate apolipoprotein C-II, which occurs as the minor form in plasma.

It is found in the secreted. In terms of biological role, component of chylomicrons, very low-density lipoproteins (VLDL), low-density lipoproteins (LDL), and high-density lipoproteins (HDL) in plasma. Plays an important role in lipoprotein metabolism as an activator of lipoprotein lipase. Both proapolipoprotein C-II and apolipoprotein C-II can activate lipoprotein lipase. The sequence is that of Apolipoprotein C-II (APOC2) from Plecturocebus moloch (Dusky titi monkey).